The primary structure comprises 435 residues: Methylenetetrahydrofolate--tRNA-(uracil-5-)-methyltransferase TrmFO (435 aa).

7-12 (GAGLAG) contacts FAD.

The protein belongs to the MnmG family. TrmFO subfamily. FAD is required as a cofactor.

The protein resides in the cytoplasm. It carries out the reaction uridine(54) in tRNA + (6R)-5,10-methylene-5,6,7,8-tetrahydrofolate + NADH + H(+) = 5-methyluridine(54) in tRNA + (6S)-5,6,7,8-tetrahydrofolate + NAD(+). The catalysed reaction is uridine(54) in tRNA + (6R)-5,10-methylene-5,6,7,8-tetrahydrofolate + NADPH + H(+) = 5-methyluridine(54) in tRNA + (6S)-5,6,7,8-tetrahydrofolate + NADP(+). Its function is as follows. Catalyzes the folate-dependent formation of 5-methyl-uridine at position 54 (M-5-U54) in all tRNAs. The sequence is that of Methylenetetrahydrofolate--tRNA-(uracil-5-)-methyltransferase TrmFO from Thermotoga maritima (strain ATCC 43589 / DSM 3109 / JCM 10099 / NBRC 100826 / MSB8).